Reading from the N-terminus, the 660-residue chain is DNA polymerase alpha-associated DNA helicase A (660 aa).

232-239 (GPPGTGKT) provides a ligand contact to ATP.

Belongs to the DNA2/NAM7 helicase family. Associates with the hexameric DNA polymerase alpha.

The protein localises to the cytoplasm. Its subcellular location is the nucleus. It carries out the reaction ATP + H2O = ADP + phosphate + H(+). In terms of biological role, DNA polymerase alpha-associated DNA helicase which may be involved in DNA replication. In Schizosaccharomyces pombe (strain 972 / ATCC 24843) (Fission yeast), this protein is DNA polymerase alpha-associated DNA helicase A (hcs1).